We begin with the raw amino-acid sequence, 622 residues long: Chaperone protein HscA homolog (622 aa).

Belongs to the heat shock protein 70 family.

In terms of biological role, chaperone involved in the maturation of iron-sulfur cluster-containing proteins. Has a low intrinsic ATPase activity which is markedly stimulated by HscB. The protein is Chaperone protein HscA homolog of Pseudoalteromonas atlantica (strain T6c / ATCC BAA-1087).